Reading from the N-terminus, the 102-residue chain is Large ribosomal subunit protein bL21 (102 aa).

The protein belongs to the bacterial ribosomal protein bL21 family. In terms of assembly, part of the 50S ribosomal subunit. Contacts protein L20.

In terms of biological role, this protein binds to 23S rRNA in the presence of protein L20. The polypeptide is Large ribosomal subunit protein bL21 (Azorhizobium caulinodans (strain ATCC 43989 / DSM 5975 / JCM 20966 / LMG 6465 / NBRC 14845 / NCIMB 13405 / ORS 571)).